Here is a 420-residue protein sequence, read N- to C-terminus: Glucose-1-phosphate adenylyltransferase (420 aa).

Alpha-D-glucose 1-phosphate is bound by residues Tyr-107, Gly-172, 187-188 (EK), and Ser-205.

Belongs to the bacterial/plant glucose-1-phosphate adenylyltransferase family. In terms of assembly, homotetramer.

The enzyme catalyses alpha-D-glucose 1-phosphate + ATP + H(+) = ADP-alpha-D-glucose + diphosphate. It participates in glycan biosynthesis; glycogen biosynthesis. Involved in the biosynthesis of ADP-glucose, a building block required for the elongation reactions to produce glycogen. Catalyzes the reaction between ATP and alpha-D-glucose 1-phosphate (G1P) to produce pyrophosphate and ADP-Glc. This is Glucose-1-phosphate adenylyltransferase from Rhizobium meliloti (strain 1021) (Ensifer meliloti).